A 236-amino-acid chain; its full sequence is 1-(5-phosphoribosyl)-5-[(5-phosphoribosylamino)methylideneamino] imidazole-4-carboxamide isomerase (236 aa).

Aspartate 8 (proton acceptor) is an active-site residue. Catalysis depends on aspartate 129, which acts as the Proton donor.

Belongs to the HisA/HisF family.

The protein resides in the cytoplasm. It catalyses the reaction 1-(5-phospho-beta-D-ribosyl)-5-[(5-phospho-beta-D-ribosylamino)methylideneamino]imidazole-4-carboxamide = 5-[(5-phospho-1-deoxy-D-ribulos-1-ylimino)methylamino]-1-(5-phospho-beta-D-ribosyl)imidazole-4-carboxamide. It functions in the pathway amino-acid biosynthesis; L-histidine biosynthesis; L-histidine from 5-phospho-alpha-D-ribose 1-diphosphate: step 4/9. The protein is 1-(5-phosphoribosyl)-5-[(5-phosphoribosylamino)methylideneamino] imidazole-4-carboxamide isomerase of Methanoregula boonei (strain DSM 21154 / JCM 14090 / 6A8).